The following is a 63-amino-acid chain: UPF0434 protein Mmar10_2939 (63 aa).

Belongs to the UPF0434 family.

This chain is UPF0434 protein Mmar10_2939, found in Maricaulis maris (strain MCS10) (Caulobacter maris).